The sequence spans 104 residues: Flagellar hook-basal body complex protein FliE (104 aa).

Belongs to the FliE family.

Its subcellular location is the bacterial flagellum basal body. This Pectobacterium atrosepticum (strain SCRI 1043 / ATCC BAA-672) (Erwinia carotovora subsp. atroseptica) protein is Flagellar hook-basal body complex protein FliE.